Reading from the N-terminus, the 410-residue chain is Digeranylgeranylglycerophospholipid reductase (410 aa).

Residues Ala15, Glu34, Val118, Asp286, Gly298, and Ile299 each coordinate FAD. A 2,3-bis-O-(geranylgeranyl)-sn-glycerol 1-phospholipid is bound by residues Lys343 and Ala379.

Belongs to the geranylgeranyl reductase family. DGGGPL reductase subfamily. The cofactor is FAD.

The catalysed reaction is a 2,3-bis-O-phytanyl-sn-glycerol 1-phospholipid + 8 A = a 2,3-bis-O-(geranylgeranyl)-sn-glycerol 1-phospholipid + 8 AH2. It catalyses the reaction 2,3-bis-O-(phytanyl)-sn-glycerol 1-phosphate + 8 A = 2,3-bis-O-(geranylgeranyl)-sn-glycerol 1-phosphate + 8 AH2. It carries out the reaction CDP-2,3-bis-O-(geranylgeranyl)-sn-glycerol + 8 AH2 = CDP-2,3-bis-O-(phytanyl)-sn-glycerol + 8 A. The enzyme catalyses archaetidylserine + 8 AH2 = 2,3-bis-O-phytanyl-sn-glycero-3-phospho-L-serine + 8 A. The protein operates within membrane lipid metabolism; glycerophospholipid metabolism. Its function is as follows. Is involved in the reduction of 2,3-digeranylgeranylglycerophospholipids (unsaturated archaeols) into 2,3-diphytanylglycerophospholipids (saturated archaeols) in the biosynthesis of archaeal membrane lipids. Can fully reduce the unsaturated isoprenoid side chains of membrane phospholipids and glycolipids. Is also able to reduce the omega-position isoprene of dolichol phosphate. The chain is Digeranylgeranylglycerophospholipid reductase from Haloferax volcanii (strain ATCC 29605 / DSM 3757 / JCM 8879 / NBRC 14742 / NCIMB 2012 / VKM B-1768 / DS2) (Halobacterium volcanii).